Here is a 309-residue protein sequence, read N- to C-terminus: DSC E3 ubiquitin ligase complex subunit C (309 aa).

N-linked (GlcNAc...) asparagine glycosylation occurs at N61. Disordered stretches follow at residues 88-110 (LPPS…GKGK) and 148-177 (EQAD…FDRL). Helical transmembrane passes span 257–277 (DDML…AMWL) and 289–309 (GLAV…RIMN).

Belongs to the dsc3 family. As to quaternary structure, component of the DSC E3 ubiquitin ligase complex composed of dscA, dscB, dscC and dscD.

It is found in the endoplasmic reticulum membrane. It participates in protein modification; protein ubiquitination. Component of the DSC E3 ubiquitin ligase complex which is required for the srbA transcriptional activator proteolytic cleavage to release the soluble transcription factor from the membrane in low oxygen or sterol conditions. Required for growth during hypoxia and triazole drug susceptibility, as well as for virulence in a murine model of invasive pulmonary aspergillosis (IPA). The polypeptide is DSC E3 ubiquitin ligase complex subunit C (Aspergillus fumigatus (strain CBS 144.89 / FGSC A1163 / CEA10) (Neosartorya fumigata)).